The following is a 162-amino-acid chain: UPF0303 protein RL3365 (162 aa).

Belongs to the UPF0303 family.

The protein is UPF0303 protein RL3365 of Rhizobium johnstonii (strain DSM 114642 / LMG 32736 / 3841) (Rhizobium leguminosarum bv. viciae).